Consider the following 510-residue polypeptide: NAD(P)H-quinone oxidoreductase subunit 2, chloroplastic (510 aa).

13 helical membrane passes run 26 to 46 (LFDG…ILLL), 57 to 77 (IPWL…ALLF), 99 to 119 (IFQV…VEYI), 124 to 144 (MAIT…MFLC), 149 to 169 (LITI…LSGY), 184 to 204 (LLMG…LYGL), 227 to 247 (PGIS…LSPA), 295 to 315 (WHLL…LIAI), 323 to 343 (MLAY…IVGD), 354 to 374 (YMLF…LFGL), 395 to 415 (ALSL…AGFF), 418 to 438 (LYLF…IALV), and 484 to 504 (MIVC…IIAI).

It belongs to the complex I subunit 2 family. NDH is composed of at least 16 different subunits, 5 of which are encoded in the nucleus.

The protein resides in the plastid. Its subcellular location is the chloroplast thylakoid membrane. It carries out the reaction a plastoquinone + NADH + (n+1) H(+)(in) = a plastoquinol + NAD(+) + n H(+)(out). It catalyses the reaction a plastoquinone + NADPH + (n+1) H(+)(in) = a plastoquinol + NADP(+) + n H(+)(out). In terms of biological role, NDH shuttles electrons from NAD(P)H:plastoquinone, via FMN and iron-sulfur (Fe-S) centers, to quinones in the photosynthetic chain and possibly in a chloroplast respiratory chain. The immediate electron acceptor for the enzyme in this species is believed to be plastoquinone. Couples the redox reaction to proton translocation, and thus conserves the redox energy in a proton gradient. The protein is NAD(P)H-quinone oxidoreductase subunit 2, chloroplastic of Trachelium caeruleum (Blue throatwort).